A 226-amino-acid polypeptide reads, in one-letter code: Probable transcriptional regulator RABBIT EARS (226 aa).

The segment at 55-77 adopts a C2H2-type zinc-finger fold; the sequence is YSCSFCGREFKSAQALGGHMNVH. The segment at 80 to 102 is disordered; the sequence is DRARLKQQSLSPSSTDQATPPEC. The segment covering 85–97 has biased composition (polar residues); that stretch reads KQQSLSPSSTDQA. The EAR-like (transcriptional repression) motif lies at 212–216; it reads LDLEL.

In terms of tissue distribution, strongly expressed in inflorescences and flowers, and weakly in siliques, seedlings and roots. In flowers, it is expressed in petal primordia and their precursor cells. Also expressed in the lateral root caps and the basal cells of lateral roots.

It is found in the nucleus. Functionally, probable transcriptional regulator essential for petal development. Required for the early development of the organ primordia of the second whorl. Acts downstream of AP1 and PTL. This is Probable transcriptional regulator RABBIT EARS (RBE) from Arabidopsis thaliana (Mouse-ear cress).